We begin with the raw amino-acid sequence, 111 residues long: Ribonuclease P protein component (111 aa).

Belongs to the RnpA family. In terms of assembly, consists of a catalytic RNA component (M1 or rnpB) and a protein subunit.

The enzyme catalyses Endonucleolytic cleavage of RNA, removing 5'-extranucleotides from tRNA precursor.. RNaseP catalyzes the removal of the 5'-leader sequence from pre-tRNA to produce the mature 5'-terminus. It can also cleave other RNA substrates such as 4.5S RNA. The protein component plays an auxiliary but essential role in vivo by binding to the 5'-leader sequence and broadening the substrate specificity of the ribozyme. The protein is Ribonuclease P protein component of Clostridium botulinum (strain 657 / Type Ba4).